We begin with the raw amino-acid sequence, 180 residues long: MLGEGSDFFDQGGYKFLRCYNNESIGFTVVMNLRANISAKPYYVGTETKYGELLPKNKFYATKAKVSRIKTIDEMDVPDKFFDEFQCYAYDGTKLKKFFPGQTIRNMNFYRDSEDIYEDIVDVRLENQSLEEQLEDFKECSRALKKYDNFWRSDRAKYLKLQEHCDNEYNRVLDKINNKK.

A coiled-coil region spans residues 114–147 (EDIYEDIVDVRLENQSLEEQLEDFKECSRALKKY).

It belongs to the mimivirus L74/L77/R857 family.

This is an uncharacterized protein from Acanthamoeba polyphaga mimivirus (APMV).